The chain runs to 141 residues: Large ribosomal subunit protein uL11 (141 aa).

This sequence belongs to the universal ribosomal protein uL11 family. In terms of assembly, part of the ribosomal stalk of the 50S ribosomal subunit. Interacts with L10 and the large rRNA to form the base of the stalk. L10 forms an elongated spine to which L12 dimers bind in a sequential fashion forming a multimeric L10(L12)X complex. Post-translationally, one or more lysine residues are methylated.

Its function is as follows. Forms part of the ribosomal stalk which helps the ribosome interact with GTP-bound translation factors. In Helicobacter hepaticus (strain ATCC 51449 / 3B1), this protein is Large ribosomal subunit protein uL11.